The chain runs to 168 residues: Peptide deformylase (168 aa).

The Fe cation site is built by Cys92 and His134. Glu135 is a catalytic residue. Residue His138 participates in Fe cation binding.

Belongs to the polypeptide deformylase family. It depends on Fe(2+) as a cofactor.

The catalysed reaction is N-terminal N-formyl-L-methionyl-[peptide] + H2O = N-terminal L-methionyl-[peptide] + formate. In terms of biological role, removes the formyl group from the N-terminal Met of newly synthesized proteins. Requires at least a dipeptide for an efficient rate of reaction. N-terminal L-methionine is a prerequisite for activity but the enzyme has broad specificity at other positions. The polypeptide is Peptide deformylase (Hahella chejuensis (strain KCTC 2396)).